A 320-amino-acid polypeptide reads, in one-letter code: Ribonuclease Z (320 aa).

Zn(2+) contacts are provided by His62, His64, Asp66, His67, His139, Asp210, and His268. The active-site Proton acceptor is the Asp66.

The protein belongs to the RNase Z family. As to quaternary structure, homodimer. Requires Zn(2+) as cofactor.

The enzyme catalyses Endonucleolytic cleavage of RNA, removing extra 3' nucleotides from tRNA precursor, generating 3' termini of tRNAs. A 3'-hydroxy group is left at the tRNA terminus and a 5'-phosphoryl group is left at the trailer molecule.. In terms of biological role, zinc phosphodiesterase, which displays some tRNA 3'-processing endonuclease activity. Probably involved in tRNA maturation, by removing a 3'-trailer from precursor tRNA. The chain is Ribonuclease Z from Cyanothece sp. (strain PCC 7425 / ATCC 29141).